A 144-amino-acid polypeptide reads, in one-letter code: SsrA-binding protein (144 aa).

It belongs to the SmpB family.

The protein localises to the cytoplasm. In terms of biological role, required for rescue of stalled ribosomes mediated by trans-translation. Binds to transfer-messenger RNA (tmRNA), required for stable association of tmRNA with ribosomes. tmRNA and SmpB together mimic tRNA shape, replacing the anticodon stem-loop with SmpB. tmRNA is encoded by the ssrA gene; the 2 termini fold to resemble tRNA(Ala) and it encodes a 'tag peptide', a short internal open reading frame. During trans-translation Ala-aminoacylated tmRNA acts like a tRNA, entering the A-site of stalled ribosomes, displacing the stalled mRNA. The ribosome then switches to translate the ORF on the tmRNA; the nascent peptide is terminated with the 'tag peptide' encoded by the tmRNA and targeted for degradation. The ribosome is freed to recommence translation, which seems to be the essential function of trans-translation. The sequence is that of SsrA-binding protein from Thermus thermophilus (strain ATCC BAA-163 / DSM 7039 / HB27).